Consider the following 295-residue polypeptide: Cytidine deaminase (295 aa).

2 CMP/dCMP-type deaminase domains span residues 48-168 and 187-295; these read TDSE…FGPA and KETD…YVAA. Substrate is bound at residue 89–91; sequence NME. Residue His-102 participates in Zn(2+) binding. The active-site Proton donor is Glu-104. 2 residues coordinate Zn(2+): Cys-129 and Cys-132.

The protein belongs to the cytidine and deoxycytidylate deaminase family. As to quaternary structure, homodimer. Zn(2+) serves as cofactor.

It carries out the reaction cytidine + H2O + H(+) = uridine + NH4(+). It catalyses the reaction 2'-deoxycytidine + H2O + H(+) = 2'-deoxyuridine + NH4(+). In terms of biological role, this enzyme scavenges exogenous and endogenous cytidine and 2'-deoxycytidine for UMP synthesis. In Photobacterium profundum (strain SS9), this protein is Cytidine deaminase.